A 407-amino-acid chain; its full sequence is Ribonuclease Z (407 aa).

Residues 1–308 (MEITFLGTSS…QDFLHYAIPR (308 aa)) are ribonuclease Z. The Zn(2+) site is built by His-62, His-64, Asp-66, His-67, His-139, Asp-210, and His-268. Asp-66 functions as the Proton acceptor in the catalytic mechanism. Residues 309–407 (DGQICAEMPP…VDWSALNVLF (99 aa)) are unknown.

Belongs to the RNase Z family. In terms of assembly, homodimer. Zn(2+) serves as cofactor.

It catalyses the reaction Endonucleolytic cleavage of RNA, removing extra 3' nucleotides from tRNA precursor, generating 3' termini of tRNAs. A 3'-hydroxy group is left at the tRNA terminus and a 5'-phosphoryl group is left at the trailer molecule.. In terms of biological role, zinc phosphodiesterase, which displays some tRNA 3'-processing endonuclease activity. Probably involved in tRNA maturation, by removing a 3'-trailer from precursor tRNA. The polypeptide is Ribonuclease Z (rnz) (Thermosynechococcus vestitus (strain NIES-2133 / IAM M-273 / BP-1)).